A 442-amino-acid polypeptide reads, in one-letter code: Histidine--tRNA ligase (442 aa).

It belongs to the class-II aminoacyl-tRNA synthetase family. In terms of assembly, homodimer.

The protein localises to the cytoplasm. The enzyme catalyses tRNA(His) + L-histidine + ATP = L-histidyl-tRNA(His) + AMP + diphosphate + H(+). The sequence is that of Histidine--tRNA ligase from Helicobacter pylori (strain HPAG1).